We begin with the raw amino-acid sequence, 128 residues long: Keratin-associated protein 2-3 (128 aa).

The segment at 5 to 112 (CCGSTLSSLS…SVQSPCCRPP (108 aa)) is 10 X 5 AA repeats of C-C-[CDPQRWG]-[APRS]-[CIPSTVD].

The protein belongs to the KRTAP type 2 family. In terms of assembly, interacts with hair keratins.

In the hair cortex, hair keratin intermediate filaments are embedded in an interfilamentous matrix, consisting of hair keratin-associated proteins (KRTAP), which are essential for the formation of a rigid and resistant hair shaft through their extensive disulfide bond cross-linking with abundant cysteine residues of hair keratins. The matrix proteins include the high-sulfur and high-glycine-tyrosine keratins. This is Keratin-associated protein 2-3 (KRTAP2-3) from Homo sapiens (Human).